The sequence spans 781 residues: MAELSPEFILNMTSDAKVRIIVEKIRKLSNITTRPPEMTLYNDQFDPEQCPGTLLPFTCYVITGTAGAGKSTSISALYQNLNCLITGATTVASQNLSRCLKTYCPTIFNAFGFKSKHINILPRSVPRRTLDTIEQIQNFELCKYWPILTSIIQEFSKKKNLGQYSSISLAAFNMLAKMTTTLWTTNVIVIDEAGTLSSHILTAVVFCYWFYNSWLNTPLYRSGAVPCIVCVGSPTQTDAFNSTYNHIQQKYNIMECDNILSFIIGNKVVSEYISLTNNWALFINNKRCTDPEFGHLLKTLEYSLKISPKTMEYIDRFVVPKAQILNPLEFLGWTRLFLSHAEVKSYLSSLHTALVTGTNVSGAKLFTCPIVCEVFTKAFNEYKSHVNLPSLTATEWLSKNLHRLSNYSQFIDQDMTAIHTETTDTSTKVTYLTKYVKNTYISLNGKTKKCVCGYVGTYKNFKKILESESFIDSHANDQPEFVYSFLCTILYNSLYNFHNYGVTEKNESYLNDLANLKLPENLTHLYTQTDLDIEREALMLEDDVFYHMVSPPPTASSASLPCLISWYTALKDIFISRLKLATTWFSNKFLDREFTSFTINMLVRDNIEFTSTNGRLHGLLEYASTVESYKLQGYTFLPVNFGRSQTTVISKDLQDKMPSIVVQDSSGFIACLEKNVNKMLETLDDGKSFHLCSAGDYGISSKLAMTIVKAQGTSLDKVAICFSNHKKIKVSHIYVAISRATNPNHIVMDCNPLKLLVNDTQSISSQHIIKALNNPNTLLVY.

64–71 (GTAGAGKS) contributes to the ATP binding site.

It belongs to the herpesviridae helicase family. Associates with the primase and the primase-associated factor to form the helicase-primase complex.

The protein resides in the host nucleus. In terms of biological role, this protein may be a helicase and is required for replication of viral DNA. Functionally, component of the helicase/primase complex. Unwinds the DNA at the replication forks and generates single-stranded DNA for both leading and lagging strand synthesis. The primase synthesizes short RNA primers on the lagging strand that the polymerase elongates using dNTPs. Possesses helicase-like motifs and therefore may act as the helicase subunit of the complex. The protein is DNA replication helicase of Saimiriine herpesvirus 2 (strain 11) (SaHV-2).